We begin with the raw amino-acid sequence, 59 residues long: Movement protein TGBp3 (59 aa).

At 1–3 the chain is on the lumenal side; that stretch reads MHL. The chain crosses the membrane as a helical span at residues 4–21; sequence AIVGALTLVLTLFVLHYT. Residues 22 to 59 lie on the Cytoplasmic side of the membrane; it reads TKDDRCYILINGHSAFTNCPASPDLAKVISQLKPHNHG.

Belongs to the Tymovirales TGBp3 protein family.

It localises to the host endoplasmic reticulum membrane. Its function is as follows. Plays a role in viral cell-to-cell propagation, by facilitating genome transport to neighboring plant cells through plasmosdesmata. May induce the formation of granular vesicles derived from the Endoplasmic reticulum, which align on actin filaments. The protein is Movement protein TGBp3 of Chenopodium album (Fat hen).